The sequence spans 262 residues: Acetylglutamate kinase (262 aa).

Substrate contacts are provided by residues 46–47, R68, and N160; that span reads GG.

This sequence belongs to the acetylglutamate kinase family. ArgB subfamily.

It is found in the cytoplasm. The enzyme catalyses N-acetyl-L-glutamate + ATP = N-acetyl-L-glutamyl 5-phosphate + ADP. It participates in amino-acid biosynthesis; L-arginine biosynthesis; N(2)-acetyl-L-ornithine from L-glutamate: step 2/4. Functionally, catalyzes the ATP-dependent phosphorylation of N-acetyl-L-glutamate. The sequence is that of Acetylglutamate kinase from Shewanella amazonensis (strain ATCC BAA-1098 / SB2B).